A 513-amino-acid chain; its full sequence is Chromosomal replication initiator protein DnaA (513 aa).

The interval 1-87 (MSVELWQQCV…IGSKRSSAPR (87 aa)) is domain I, interacts with DnaA modulators. Residues 87–176 (RAAPNAPLAA…QVEGALKHTS (90 aa)) are domain II. Positions 113–163 (AAPAPAPAPTSAPAKKAAAQKAAEVSEEPSRDSFDPMAGASSQQAPVRAEQ) are disordered. Residues 123 to 135 (SAPAKKAAAQKAA) show a composition bias toward low complexity. The tract at residues 177-393 (YLNRTFTFEN…GALKRVIAHS (217 aa)) is domain III, AAA+ region. The ATP site is built by Gly221, Gly223, Lys224, and Thr225. The tract at residues 394-513 (HFMGRDITIE…YKNLLRTLTT (120 aa)) is domain IV, binds dsDNA.

Belongs to the DnaA family. As to quaternary structure, oligomerizes as a right-handed, spiral filament on DNA at oriC.

It localises to the cytoplasm. Plays an essential role in the initiation and regulation of chromosomal replication. ATP-DnaA binds to the origin of replication (oriC) to initiate formation of the DNA replication initiation complex once per cell cycle. Binds the DnaA box (a 9 base pair repeat at the origin) and separates the double-stranded (ds)DNA. Forms a right-handed helical filament on oriC DNA; dsDNA binds to the exterior of the filament while single-stranded (ss)DNA is stabiized in the filament's interior. The ATP-DnaA-oriC complex binds and stabilizes one strand of the AT-rich DNA unwinding element (DUE), permitting loading of DNA polymerase. After initiation quickly degrades to an ADP-DnaA complex that is not apt for DNA replication. Binds acidic phospholipids. This is Chromosomal replication initiator protein DnaA from Pseudomonas fluorescens (strain ATCC BAA-477 / NRRL B-23932 / Pf-5).